A 171-amino-acid polypeptide reads, in one-letter code: Putative auxin-responsive protein IAA29 (171 aa).

The 96-residue stretch at 19-114 folds into the PB1 domain; that stretch reads SRFVKVFMHG…TVKKIYIVPA (96 aa). Residues 117–171 form a disordered region; the sequence is QNENDYQEEEEDNAAAAATADEDGDGAAADDGVAAAADDVDDVAGYTSNDDPSFD. Over residues 142-153 the composition is skewed to low complexity; sequence GAAADDGVAAAA. Positions 162–171 are enriched in polar residues; the sequence is YTSNDDPSFD.

This sequence belongs to the Aux/IAA family. Homodimers and heterodimers.

It localises to the nucleus. In terms of biological role, aux/IAA proteins are short-lived transcriptional factors that function as repressors of early auxin response genes at low auxin concentrations. The sequence is that of Putative auxin-responsive protein IAA29 (IAA29) from Oryza sativa subsp. japonica (Rice).